The sequence spans 867 residues: MKFMTSDEIREAYLSFFEKKGHKRLPSASLIPDDPQLMFTVAGMVPFKPIFWGKVDPVYPRVTTCQKCVRTNDIENVGRTPRHHTFFEMLGNFSFGDYFKQEAIEWAWEFVTKVLEMPEEKLWVSVYEYDDEAYEIWRKLGVPERKIVRMSKEDNFWGPAGPTGPCGPCSEIFYDTGVEVPVPEGQDPTPANTDGRYIEIWNLVFTEFYQDEEGNLHPLPRKNIDTGAGLERISAMMQGVYWNFDTDLFKPIIESIENVLKVSYKSDKVKDVSIRVIADHVRSVTFMIADGVLPSNEGRGYVLRRVLRRALRHGVLLGAKEPFLYKIVDSVVQKMGKIYPEIVEKQSFVENIVKSEELKFINNLSRGLEIVQKIVTTSGKISAEDAFKLYDTYGFPIDILRDIATENGYELDEKGFEKYLEEQRERSRKAQGEVEFAQKTGYENLGIETVFVGYDTLVSESSVLKIRVNGEFVEKAEGNDLECELILDITPFYAEKGGQVADTGVIKSQDGLFTVEYVYSPVEGIIVHRGKLNGKISVNEKVQSQVDEIKRKSTMRNHTATHILHSALRKVLGSHVRQAGSLVEPTRLRFDFTHYQALTKDEITKIENIVNEVILKAIPVVTEIKSYDEAVKEGAMALFEEKYGDFVRVVKVSDFSEELCGGTHVKNTGEIGLFKIVSESAVSAGVRRIEAITGLNSLEYLRTDEELFEKLKLLLEAPKSEIVEKIQKILEEKKNLEKEIQEIKRKLINPEEIAKKVKEYNNIKYVVSVLEDVEPDILKDLIDNISDRIKGIVLLISKMSDKIIVTVKVPKELTQDYNAGNIAKLVSKVLGGGGGGSPTFAQAGGKLIEKIDEATELFEKIIRKEVQ.

The Zn(2+) site is built by His-558, His-562, Cys-660, and His-664.

The protein belongs to the class-II aminoacyl-tRNA synthetase family. Zn(2+) is required as a cofactor.

The protein localises to the cytoplasm. The catalysed reaction is tRNA(Ala) + L-alanine + ATP = L-alanyl-tRNA(Ala) + AMP + diphosphate. In terms of biological role, catalyzes the attachment of alanine to tRNA(Ala) in a two-step reaction: alanine is first activated by ATP to form Ala-AMP and then transferred to the acceptor end of tRNA(Ala). Also edits incorrectly charged Ser-tRNA(Ala) and Gly-tRNA(Ala) via its editing domain. The protein is Alanine--tRNA ligase of Fervidobacterium nodosum (strain ATCC 35602 / DSM 5306 / Rt17-B1).